Reading from the N-terminus, the 499-residue chain is Putative sperm motility kinase W (499 aa).

In terms of domain architecture, Protein kinase spans 14–262 (YKVLFTLGHG…IEDIERHPWV (249 aa)). Residues 20–28 (LGHGSFGTV) and K43 contribute to the ATP site. The active-site Proton acceptor is the D133. The UBA domain occupies 274 to 314 (DPDYNIIEMLCGMGFDANEILESLQRKKYNESMGAYLILKA).

Belongs to the protein kinase superfamily. CAMK Ser/Thr protein kinase family. Smok subfamily.

It carries out the reaction L-seryl-[protein] + ATP = O-phospho-L-seryl-[protein] + ADP + H(+). It catalyses the reaction L-threonyl-[protein] + ATP = O-phospho-L-threonyl-[protein] + ADP + H(+). May play a role in sperm motility, especially in the regulation of flagellar function. This is Putative sperm motility kinase W from Mus musculus (Mouse).